We begin with the raw amino-acid sequence, 605 residues long: Branchpoint-bridging protein (605 aa).

Disordered stretches follow at residues 1–75 (MSST…GENK) and 117–139 (VPPE…KRTN). The KH domain maps to 184–264 (YIPVNEYPDI…EKIARAVQLV (81 aa)). Residues 294–319 (GTLRDDENYGGAPQSSSGDEMDDRNK) are disordered. The CCHC-type zinc-finger motif lies at 328-345 (IVCHICGSKGHFARDCLE). Residues 376–392 (ASQQQSIAQNPNTNNVS) are compositionally biased toward polar residues. A disordered region spans residues 376–605 (ASQQQSIAQN…PPPGVIGPPK (230 aa)). Residues 411 to 424 (PMSERGGSFDRFDR) are compositionally biased toward basic and acidic residues. Positions 428–445 (NQSNQREPQQQSHQQNMH) are enriched in polar residues. Residues 446–466 (NTNGNNYDRYDRNFNNSSNSS) are compositionally biased toward low complexity. The segment covering 468–484 (ELPPWHRPTPPSQPAAP) has biased composition (pro residues). Residues 499–510 (SVQQSMQQSPWN) are compositionally biased toward polar residues. 2 stretches are compositionally biased toward pro residues: residues 561–581 (SVPP…PPGV) and 591–605 (RHPP…GPPK).

Belongs to the BBP/SF1 family.

The protein resides in the nucleus. Its function is as follows. Necessary for the splicing of pre-mRNA. Has a role in the recognition of the branch site (5'-UACUAAC-3'), the pyrimidine tract and the 3'-splice site at the 3'-end of introns. The polypeptide is Branchpoint-bridging protein (BBP) (Yarrowia lipolytica (strain CLIB 122 / E 150) (Yeast)).